A 144-amino-acid polypeptide reads, in one-letter code: Histone H2B.2, sperm (144 aa).

The interval 1-51 (MPRSPAKTSPRKGSPRKGSPSRKASPKRGGKGAKRAGKGGRRRRVVKRRRR) is disordered. 5 consecutive short sequence motifs (SPKK motif) follow at residues 4–7 (SPAK), 9–12 (SPRK), 14–17 (SPRK), 19–22 (SPSR), and 25–28 (SPKR). Phosphoserine occurs at positions 14, 19, and 25. Residues 24–51 (ASPKRGGKGAKRAGKGGRRRRVVKRRRR) are compositionally biased toward basic residues. Ser-131 is a glycosylation site (O-linked (GlcNAc) serine). Residue Lys-139 forms a Glycyl lysine isopeptide (Lys-Gly) (interchain with G-Cter in ubiquitin) linkage.

This sequence belongs to the histone H2B family. In terms of assembly, the nucleosome is a histone octamer containing two molecules each of H2A, H2B, H3 and H4 assembled in one H3-H4 heterotetramer and two H2A-H2B heterodimers. The octamer wraps approximately 147 bp of DNA. Monoubiquitination of Lys-139 gives a specific tag for epigenetic transcriptional activation and is also prerequisite for histone H3 'Lys-4' and 'Lys-79' methylation. Post-translationally, phosphorylated on SPKK motifs 3, 4 and 5; which may regulate DNA binding. Dephosphorylated during maturation of spermatids to mature sperm and rephosphorylated at fertilization.

It localises to the nucleus. It is found in the chromosome. Core component of nucleosome. Nucleosomes wrap and compact DNA into chromatin, limiting DNA accessibility to the cellular machineries which require DNA as a template. Histones thereby play a central role in transcription regulation, DNA repair, DNA replication and chromosomal stability. DNA accessibility is regulated via a complex set of post-translational modifications of histones, also called histone code, and nucleosome remodeling. This Parechinus angulosus (Angulate sea urchin) protein is Histone H2B.2, sperm.